A 327-amino-acid polypeptide reads, in one-letter code: Probable cell division protein WhiA (327 aa).

The H-T-H motif DNA-binding region spans 275–308 (SLEELGRLADPQMTKDAVAGRIRRLLTMADKRAE).

This sequence belongs to the WhiA family.

Involved in cell division and chromosome segregation. This Corynebacterium glutamicum (strain R) protein is Probable cell division protein WhiA.